Consider the following 91-residue polypeptide: Acylphosphatase (91 aa).

Residues 6–91 enclose the Acylphosphatase-like domain; the sequence is CMRCYISGRV…WKDYISFDVL (86 aa). Residues Arg21 and Asn39 contribute to the active site.

The protein belongs to the acylphosphatase family.

It catalyses the reaction an acyl phosphate + H2O = a carboxylate + phosphate + H(+). The protein is Acylphosphatase (acyP) of Legionella pneumophila (strain Paris).